The chain runs to 858 residues: Bifunctional uridylyltransferase/uridylyl-removing enzyme (858 aa).

The uridylyltransferase stretch occupies residues 1–324 (MSASVAAPPP…PATSGVTRVL (324 aa)). Residues 325–681 (SPGRFVEKQG…ARPSPVGDAL (357 aa)) are uridylyl-removing. Residues 443–565 (VDQHILMVLR…VGNERRLTAL (123 aa)) form the HD domain. ACT domains are found at residues 682–761 (QVLV…PEPS) and 790–858 (ILSV…AIAV).

Belongs to the GlnD family. Mg(2+) is required as a cofactor.

It catalyses the reaction [protein-PII]-L-tyrosine + UTP = [protein-PII]-uridylyl-L-tyrosine + diphosphate. The catalysed reaction is [protein-PII]-uridylyl-L-tyrosine + H2O = [protein-PII]-L-tyrosine + UMP + H(+). Uridylyltransferase (UTase) activity is inhibited by glutamine, while glutamine activates uridylyl-removing (UR) activity. Its function is as follows. Modifies, by uridylylation and deuridylylation, the PII regulatory proteins (GlnB and homologs), in response to the nitrogen status of the cell that GlnD senses through the glutamine level. Under low glutamine levels, catalyzes the conversion of the PII proteins and UTP to PII-UMP and PPi, while under higher glutamine levels, GlnD hydrolyzes PII-UMP to PII and UMP (deuridylylation). Thus, controls uridylylation state and activity of the PII proteins, and plays an important role in the regulation of nitrogen assimilation and metabolism. This Burkholderia thailandensis (strain ATCC 700388 / DSM 13276 / CCUG 48851 / CIP 106301 / E264) protein is Bifunctional uridylyltransferase/uridylyl-removing enzyme.